A 471-amino-acid polypeptide reads, in one-letter code: MKRTLFDKIWDAHVVDRLEDGTCILYIDRHLVHEVTSPQAFEGLRMAGRLVRRPDATIAVVDHNVPTSDRRAGIQEPESRLQVETLQKNVAEFGVPYFDLLDVRQGIVHVVGPEQGISLPGFTIVCGDSHTSTHGALGALAFGIGTSEVEHVLATQTLLQKPAKNMLVEVRGKMPPGTTAKDMILAIIGKIGTAGGNGHVIEYAGEAVRALDMAGRMTICNMSIEAGARAGLVAPDDVTFEWLRGRPFAPQGEDFDRAVEYWRSLASDEGAHYDRVVVLEASEIVPMVTWGTSPEDVVRIDGTVPDPDRATDEARRTQMRRMLDYMDLKPGASIADLPVDVVFIGSCTNSRIEDLRSAAAIARGRHVADGVRALVVPGSGIVRQQAEQEGLDRIFLEAGFEWREPGCSMCLGMNPDKLTPGQRCASTSNRNFEGRQGPGGRTHLLSPAMAAAAAVTGKLTDVRTLNVEETV.

[4Fe-4S] cluster is bound by residues Cys347, Cys407, and Cys410.

It belongs to the aconitase/IPM isomerase family. LeuC type 1 subfamily. In terms of assembly, heterodimer of LeuC and LeuD. Requires [4Fe-4S] cluster as cofactor.

The catalysed reaction is (2R,3S)-3-isopropylmalate = (2S)-2-isopropylmalate. It functions in the pathway amino-acid biosynthesis; L-leucine biosynthesis; L-leucine from 3-methyl-2-oxobutanoate: step 2/4. In terms of biological role, catalyzes the isomerization between 2-isopropylmalate and 3-isopropylmalate, via the formation of 2-isopropylmaleate. This is 3-isopropylmalate dehydratase large subunit from Granulibacter bethesdensis (strain ATCC BAA-1260 / CGDNIH1).